The chain runs to 160 residues: SsrA-binding protein (160 aa).

It belongs to the SmpB family.

Its subcellular location is the cytoplasm. Required for rescue of stalled ribosomes mediated by trans-translation. Binds to transfer-messenger RNA (tmRNA), required for stable association of tmRNA with ribosomes. tmRNA and SmpB together mimic tRNA shape, replacing the anticodon stem-loop with SmpB. tmRNA is encoded by the ssrA gene; the 2 termini fold to resemble tRNA(Ala) and it encodes a 'tag peptide', a short internal open reading frame. During trans-translation Ala-aminoacylated tmRNA acts like a tRNA, entering the A-site of stalled ribosomes, displacing the stalled mRNA. The ribosome then switches to translate the ORF on the tmRNA; the nascent peptide is terminated with the 'tag peptide' encoded by the tmRNA and targeted for degradation. The ribosome is freed to recommence translation, which seems to be the essential function of trans-translation. This chain is SsrA-binding protein, found in Novosphingobium aromaticivorans (strain ATCC 700278 / DSM 12444 / CCUG 56034 / CIP 105152 / NBRC 16084 / F199).